A 71-amino-acid polypeptide reads, in one-letter code: ATP synthase F(0) complex subunit e, mitochondrial (71 aa).

Lys-34 carries the N6-acetyllysine modification. Ser-68 carries the phosphoserine modification.

It belongs to the ATPase e subunit family. As to quaternary structure, component of the ATP synthase complex composed at least of ATP5F1A/subunit alpha, ATP5F1B/subunit beta, ATP5MC1/subunit c (homooctomer), MT-ATP6/subunit a, MT-ATP8/subunit 8, ATP5ME/subunit e, ATP5MF/subunit f, ATP5MG/subunit g, ATP5MK/subunit k, ATP5MJ/subunit j, ATP5F1C/subunit gamma, ATP5F1D/subunit delta, ATP5F1E/subunit epsilon, ATP5PF/subunit F6, ATP5PB/subunit b, ATP5PD/subunit d, ATP5PO/subunit OSCP. ATP synthase complex consists of a soluble F(1) head domain (subunits alpha(3) and beta(3)) - the catalytic core - and a membrane F(0) domain - the membrane proton channel (subunits c, a, 8, e, f, g, k and j). These two domains are linked by a central stalk (subunits gamma, delta, and epsilon) rotating inside the F1 region and a stationary peripheral stalk (subunits F6, b, d, and OSCP).

It localises to the mitochondrion. The protein resides in the mitochondrion inner membrane. Functionally, subunit e, of the mitochondrial membrane ATP synthase complex (F(1)F(0) ATP synthase or Complex V) that produces ATP from ADP in the presence of a proton gradient across the membrane which is generated by electron transport complexes of the respiratory chain. ATP synthase complex consist of a soluble F(1) head domain - the catalytic core - and a membrane F(1) domain - the membrane proton channel. These two domains are linked by a central stalk rotating inside the F(1) region and a stationary peripheral stalk. During catalysis, ATP synthesis in the catalytic domain of F(1) is coupled via a rotary mechanism of the central stalk subunits to proton translocation. In vivo, can only synthesize ATP although its ATP hydrolase activity can be activated artificially in vitro. Part of the complex F(0) domain. The chain is ATP synthase F(0) complex subunit e, mitochondrial from Rattus norvegicus (Rat).